A 160-amino-acid polypeptide reads, in one-letter code: Large ribosomal subunit protein uL22c (160 aa).

The protein belongs to the universal ribosomal protein uL22 family. Part of the 50S ribosomal subunit.

The protein resides in the plastid. It is found in the chloroplast. This protein binds specifically to 23S rRNA. In terms of biological role, the globular domain of the protein is located near the polypeptide exit tunnel on the outside of the subunit, while an extended beta-hairpin is found that lines the wall of the exit tunnel in the center of the 70S ribosome. The polypeptide is Large ribosomal subunit protein uL22c (rpl22) (Eucalyptus globulus subsp. globulus (Tasmanian blue gum)).